The primary structure comprises 117 residues: Thioredoxin (117 aa).

In terms of domain architecture, Thioredoxin spans 2 to 116 (AISLTEEDFV…FENIIKDFFG (115 aa)). Cysteine 40 and cysteine 43 are oxidised to a cystine.

The protein belongs to the thioredoxin family.

In terms of biological role, participates in various redox reactions through the reversible oxidation of its active center dithiol to a disulfide and catalyzes dithiol-disulfide exchange reactions. In Borreliella burgdorferi (strain ATCC 35210 / DSM 4680 / CIP 102532 / B31) (Borrelia burgdorferi), this protein is Thioredoxin (trxA).